The following is a 78-amino-acid chain: Defensin-like protein 173 (78 aa).

The signal sequence occupies residues 1 to 23 (MAKAPSPLVFPIIFLIIFALVEP). Disulfide bonds link C27/C71, C34/C56, C40/C65, and C44/C67.

The protein belongs to the DEFL family.

The protein localises to the secreted. The protein is Defensin-like protein 173 (LCR63) of Arabidopsis thaliana (Mouse-ear cress).